Reading from the N-terminus, the 1020-residue chain is Carbamoyl phosphate synthase arginine-specific large chain (1020 aa).

Positions 1 to 401 are carboxyphosphate synthetic domain; that stretch reads MPKNNAIHSI…ATLKAIASLE (401 aa). Positions 129, 169, 175, 176, 208, 210, 215, 241, 242, 243, 284, and 298 each coordinate ATP. An ATP-grasp 1 domain is found at 133 to 327; that stretch reads KTLMKRLHQP…IAKIAADIAI (195 aa). Mg(2+) contacts are provided by Gln284, Glu298, and Asn300. Mn(2+) contacts are provided by Gln284, Glu298, and Asn300. Oligomerization domain stretches follow at residues 402–542 and 402–544; these read IDPK…FGQT and IDPK…QTNE. Carbamoyl phosphate synthetic domain regions lie at residues 543 to 927 and 544 to 927; these read NESH…ADSY and ESHP…ADSY. The region spanning 669-858 is the ATP-grasp 2 domain; it reads ADCLRLLKIA…LAQLATRLIL (190 aa). Arg705, Gln744, Leu746, Glu750, Gly775, Val776, His777, Ser778, and Gln818 together coordinate ATP. Mg(2+) contacts are provided by Gln818 and Asn831. Mn(2+) is bound by residues Gln818 and Asn831. The 94-residue stretch at 927–1020 folds into the MGS-like domain; it reads YHLETWQTVD…LAVTPTPATI (94 aa). The interval 928 to 1020 is allosteric domain; the sequence is HLETWQTVDG…LAVTPTPATI (93 aa).

It belongs to the CarB family. In terms of assembly, composed of two chains; the small (or glutamine) chain promotes the hydrolysis of glutamine to ammonia, which is used by the large (or ammonia) chain to synthesize carbamoyl phosphate. Tetramer of heterodimers (alpha,beta)4. Mg(2+) is required as a cofactor. The cofactor is Mn(2+).

It catalyses the reaction hydrogencarbonate + L-glutamine + 2 ATP + H2O = carbamoyl phosphate + L-glutamate + 2 ADP + phosphate + 2 H(+). The catalysed reaction is hydrogencarbonate + NH4(+) + 2 ATP = carbamoyl phosphate + 2 ADP + phosphate + 2 H(+). The protein operates within amino-acid biosynthesis; L-arginine biosynthesis; carbamoyl phosphate from bicarbonate: step 1/1. Functionally, large subunit of the glutamine-dependent carbamoyl phosphate synthetase (CPSase). CPSase catalyzes the formation of carbamoyl phosphate from the ammonia moiety of glutamine, carbonate, and phosphate donated by ATP, constituting the first step of the biosynthetic pathway leading to arginine and/or urea. The large subunit (synthetase) binds the substrates ammonia (free or transferred from glutamine from the small subunit), hydrogencarbonate and ATP and carries out an ATP-coupled ligase reaction, activating hydrogencarbonate by forming carboxy phosphate which reacts with ammonia to form carbamoyl phosphate. In Lactiplantibacillus plantarum (strain ATCC BAA-793 / NCIMB 8826 / WCFS1) (Lactobacillus plantarum), this protein is Carbamoyl phosphate synthase arginine-specific large chain.